Here is a 472-residue protein sequence, read N- to C-terminus: Ribulose bisphosphate carboxylase large chain (472 aa).

Residues Asn-115 and Thr-165 each coordinate substrate. Residue Lys-167 is the Proton acceptor of the active site. Substrate is bound at residue Lys-169. Positions 193, 195, and 196 each coordinate Mg(2+). The residue at position 193 (Lys-193) is an N6-carboxylysine. His-286 serves as the catalytic Proton acceptor. Residues Arg-287, His-319, and Ser-371 each coordinate substrate.

It belongs to the RuBisCO large chain family. Type I subfamily. In terms of assembly, heterohexadecamer of 8 large chains and 8 small chains. Requires Mg(2+) as cofactor.

The enzyme catalyses 2 (2R)-3-phosphoglycerate + 2 H(+) = D-ribulose 1,5-bisphosphate + CO2 + H2O. The catalysed reaction is D-ribulose 1,5-bisphosphate + O2 = 2-phosphoglycolate + (2R)-3-phosphoglycerate + 2 H(+). In terms of biological role, ruBisCO catalyzes two reactions: the carboxylation of D-ribulose 1,5-bisphosphate, the primary event in carbon dioxide fixation, as well as the oxidative fragmentation of the pentose substrate. Both reactions occur simultaneously and in competition at the same active site. The protein is Ribulose bisphosphate carboxylase large chain of Solemya velum gill symbiont.